Reading from the N-terminus, the 772-residue chain is Mitochondrial intermediate peptidase (772 aa).

Residues 1–33 (MLARPSTTVLARRPFFRFRGCLNEPRPTKARCL) constitute a mitochondrion transit peptide. His556 contacts Zn(2+). Glu557 is an active-site residue. Zn(2+) is bound by residues His560 and His563.

Belongs to the peptidase M3 family. Requires Zn(2+) as cofactor.

The protein localises to the mitochondrion matrix. The catalysed reaction is Release of an N-terminal octapeptide as second stage of processing of some proteins imported into the mitochondrion.. In terms of biological role, cleaves proteins, imported into the mitochondrion, to their mature size. While most mitochondrial precursor proteins are processed to the mature form in one step by mitochondrial processing peptidase (MPP), the sequential cleavage by MIP of an octapeptide after initial processing by MPP is a required step for a subgroup of nuclear-encoded precursor proteins destined for the matrix or the inner membrane. The sequence is that of Mitochondrial intermediate peptidase (OCT1) from Coprinopsis scobicola (Ink cap fungus).